The chain runs to 161 residues: Ureidoglycolate lyase (161 aa).

This sequence belongs to the ureidoglycolate lyase family. As to quaternary structure, homodimer. Requires Ni(2+) as cofactor.

It catalyses the reaction (S)-ureidoglycolate = urea + glyoxylate. The protein operates within nitrogen metabolism; (S)-allantoin degradation. Functionally, catalyzes the catabolism of the allantoin degradation intermediate (S)-ureidoglycolate, generating urea and glyoxylate. Involved in the utilization of allantoin as nitrogen source. This is Ureidoglycolate lyase from Rhodobacter capsulatus (strain ATCC BAA-309 / NBRC 16581 / SB1003).